Consider the following 322-residue polypeptide: HPr kinase/phosphorylase (322 aa).

Active-site residues include His146 and Lys167. Residue 161 to 168 coordinates ATP; that stretch reads GDSGLGKS. Ser168 contacts Mg(2+). The active-site Proton acceptor; for phosphorylation activity. Proton donor; for dephosphorylation activity is the Asp185. The tract at residues 209-218 is important for the catalytic mechanism of both phosphorylation and dephosphorylation; it reads LEVRGLGLLD. A Mg(2+)-binding site is contributed by Glu210. Arg250 is a catalytic residue. The tract at residues 271 to 276 is important for the catalytic mechanism of dephosphorylation; sequence QVAAGR.

It belongs to the HPrK/P family. As to quaternary structure, homohexamer. Mg(2+) serves as cofactor.

It catalyses the reaction [HPr protein]-L-serine + ATP = [HPr protein]-O-phospho-L-serine + ADP + H(+). It carries out the reaction [HPr protein]-O-phospho-L-serine + phosphate + H(+) = [HPr protein]-L-serine + diphosphate. Catalyzes the ATP- as well as the pyrophosphate-dependent phosphorylation of a specific serine residue in HPr, a phosphocarrier protein of the phosphoenolpyruvate-dependent sugar phosphotransferase system (PTS). HprK/P also catalyzes the pyrophosphate-producing, inorganic phosphate-dependent dephosphorylation (phosphorolysis) of seryl-phosphorylated HPr (P-Ser-HPr). The polypeptide is HPr kinase/phosphorylase (Paraburkholderia phymatum (strain DSM 17167 / CIP 108236 / LMG 21445 / STM815) (Burkholderia phymatum)).